We begin with the raw amino-acid sequence, 393 residues long: NAD(P)H-quinone oxidoreductase subunit H, chloroplastic (393 aa).

It belongs to the complex I 49 kDa subunit family. As to quaternary structure, NDH is composed of at least 16 different subunits, 5 of which are encoded in the nucleus.

It is found in the plastid. The protein resides in the chloroplast thylakoid membrane. It carries out the reaction a plastoquinone + NADH + (n+1) H(+)(in) = a plastoquinol + NAD(+) + n H(+)(out). The enzyme catalyses a plastoquinone + NADPH + (n+1) H(+)(in) = a plastoquinol + NADP(+) + n H(+)(out). Its function is as follows. NDH shuttles electrons from NAD(P)H:plastoquinone, via FMN and iron-sulfur (Fe-S) centers, to quinones in the photosynthetic chain and possibly in a chloroplast respiratory chain. The immediate electron acceptor for the enzyme in this species is believed to be plastoquinone. Couples the redox reaction to proton translocation, and thus conserves the redox energy in a proton gradient. This Jasminum nudiflorum (Winter jasmine) protein is NAD(P)H-quinone oxidoreductase subunit H, chloroplastic.